The chain runs to 1311 residues: Cyclin-G-associated kinase (1311 aa).

N-acetylserine is present on S2. S2 and S16 each carry phosphoserine. The 275-residue stretch at 40-314 (LRVRRVLAEG…SIAEVVHQLQ (275 aa)) folds into the Protein kinase domain. The Proton acceptor role is filled by D173. The 168-residue stretch at 399–566 (SVANYAKGDL…EYMCDMVAEE (168 aa)) folds into the Phosphatase tensin-type domain. Residue S456 is modified to Phosphoserine. The 139-residue stretch at 572-710 (SKPILVRAVV…FQVNLEVEVE (139 aa)) folds into the C2 tensin-type domain. Disordered stretches follow at residues 709-729 (VEPR…SMRG) and 749-788 (FGKP…SADA). S770 is modified (phosphoserine). Over residues 770–788 (SPEAEPTDSDSPPSSSADA) the composition is skewed to low complexity. Position 776 is a phosphothreonine (T776). The residue at position 783 (S783) is a Phosphoserine. At T794 the chain carries Phosphothreonine. Disordered stretches follow at residues 801–860 (KEAE…VQQD), 913–1035 (CLLG…DLLG), and 1047–1150 (AVAP…PNYA). S811, S826, S829, S834, and S939 each carry phosphoserine. Low complexity-rich tracts occupy residues 925–939 (PPED…LLAS) and 950–966 (PRGG…PLLP). 2 stretches are compositionally biased toward polar residues: residues 967-976 (SSGNNSQPCS) and 1070-1080 (SQASWTKSQNP). The residue at position 1096 (S1096) is a Phosphoserine. The segment covering 1109–1124 (TATTPKGSSSWQTSRP) has biased composition (polar residues). R1123 carries the post-translational modification Omega-N-methylarginine. 2 positions are modified to phosphoserine: S1176 and S1185. Residues 1247–1311 (SRWTPVGMAD…FENQGSRPLF (65 aa)) form the J domain.

Belongs to the protein kinase superfamily. Ser/Thr protein kinase family. As to expression, ubiquitous. Highest in testis.

It is found in the cytoplasm. The protein localises to the perinuclear region. Its subcellular location is the golgi apparatus. It localises to the trans-Golgi network. The protein resides in the cell junction. It is found in the focal adhesion. The protein localises to the cytoplasmic vesicle. Its subcellular location is the clathrin-coated vesicle. The catalysed reaction is L-seryl-[protein] + ATP = O-phospho-L-seryl-[protein] + ADP + H(+). It carries out the reaction L-threonyl-[protein] + ATP = O-phospho-L-threonyl-[protein] + ADP + H(+). Functionally, associates with cyclin G and CDK5. Seems to act as an auxilin homolog that is involved in the uncoating of clathrin-coated vesicles by Hsc70 in non-neuronal cells. Expression oscillates slightly during the cell cycle, peaking at G1. May play a role in clathrin-mediated endocytosis and intracellular trafficking, and in the dynamics of clathrin assembly/disassembly. The polypeptide is Cyclin-G-associated kinase (Homo sapiens (Human)).